Reading from the N-terminus, the 597-residue chain is TOX high mobility group box family member 4 (597 aa).

2 disordered regions span residues 160 to 224 (GAIL…EPQK) and 520 to 546 (VQEE…SPQP). A compositionally biased stretch (basic residues) spans 207–217 (KPKTPKKKKKK). The short motif at 212 to 217 (KKKKKK) is the Nuclear localization signal element. The segment at residues 222–290 (PQKPLSAYAL…EYLKALALYK (69 aa)) is a DNA-binding region (HMG box).

Component of the PNUTS-PP1 phosphatase complex.

The protein localises to the nucleus. It localises to the chromosome. Functionally, transcription factor that modulates cell fate reprogramming from the somatic state to the pluripotent and neuronal fate. Also acts as a regulatory component of protein phosphatase 1 (PP1) complexes. Component of the PNUTS-PP1 protein phosphatase complex, a PP1 complex that regulates RNA polymerase II transcription pause-release. PNUTS-PP1 also plays a role in the control of chromatin structure and cell cycle progression during the transition from mitosis into interphase. The polypeptide is TOX high mobility group box family member 4 (tox4) (Xenopus tropicalis (Western clawed frog)).